A 264-amino-acid polypeptide reads, in one-letter code: Zinc finger protein CG30 (264 aa).

The RING-type zinc-finger motif lies at C8–R63.

The protein localises to the host nucleus. Functionally, plays a role in the proper expression of late and very late genes. This is Zinc finger protein CG30 (CG30) from Autographa californica nuclear polyhedrosis virus (AcMNPV).